Reading from the N-terminus, the 524-residue chain is Bifunctional purine biosynthesis protein PurH (524 aa).

The MGS-like domain occupies 1-145 (MIKQALLSVS…KNHRDVTVIV (145 aa)).

The protein belongs to the PurH family.

The enzyme catalyses (6R)-10-formyltetrahydrofolate + 5-amino-1-(5-phospho-beta-D-ribosyl)imidazole-4-carboxamide = 5-formamido-1-(5-phospho-D-ribosyl)imidazole-4-carboxamide + (6S)-5,6,7,8-tetrahydrofolate. It carries out the reaction IMP + H2O = 5-formamido-1-(5-phospho-D-ribosyl)imidazole-4-carboxamide. It participates in purine metabolism; IMP biosynthesis via de novo pathway; 5-formamido-1-(5-phospho-D-ribosyl)imidazole-4-carboxamide from 5-amino-1-(5-phospho-D-ribosyl)imidazole-4-carboxamide (10-formyl THF route): step 1/1. Its pathway is purine metabolism; IMP biosynthesis via de novo pathway; IMP from 5-formamido-1-(5-phospho-D-ribosyl)imidazole-4-carboxamide: step 1/1. This is Bifunctional purine biosynthesis protein PurH from Cupriavidus taiwanensis (strain DSM 17343 / BCRC 17206 / CCUG 44338 / CIP 107171 / LMG 19424 / R1) (Ralstonia taiwanensis (strain LMG 19424)).